We begin with the raw amino-acid sequence, 309 residues long: Glutaminase (309 aa).

Substrate contacts are provided by Ser64, Asn114, Glu160, Asn167, Tyr191, Tyr243, and Val261.

This sequence belongs to the glutaminase family. As to quaternary structure, homotetramer.

It catalyses the reaction L-glutamine + H2O = L-glutamate + NH4(+). This Azorhizobium caulinodans (strain ATCC 43989 / DSM 5975 / JCM 20966 / LMG 6465 / NBRC 14845 / NCIMB 13405 / ORS 571) protein is Glutaminase.